The sequence spans 67 residues: Small, acid-soluble spore protein 2 (67 aa).

This sequence belongs to the alpha/beta-type SASP family.

In terms of biological role, SASP are bound to spore DNA. They are double-stranded DNA-binding proteins that cause DNA to change to an a-like conformation. They protect the DNA backbone from chemical and enzymatic cleavage and are thus involved in dormant spore's high resistance to UV light. This is Small, acid-soluble spore protein 2 (Su-2) from Sporosarcina ureae.